A 132-amino-acid polypeptide reads, in one-letter code: D-ribose pyranase (132 aa).

His-20 acts as the Proton donor in catalysis. Substrate-binding positions include Asp-28, His-99, and 121 to 123 (YSN).

This sequence belongs to the RbsD / FucU family. RbsD subfamily. In terms of assembly, homodecamer.

It localises to the cytoplasm. The enzyme catalyses beta-D-ribopyranose = beta-D-ribofuranose. It participates in carbohydrate metabolism; D-ribose degradation; D-ribose 5-phosphate from beta-D-ribopyranose: step 1/2. Functionally, catalyzes the interconversion of beta-pyran and beta-furan forms of D-ribose. This Pseudomonas putida (strain GB-1) protein is D-ribose pyranase.